Consider the following 870-residue polypeptide: DNA mismatch repair protein MutS (870 aa).

ATP is bound at residue 616-623; the sequence is GPNMAGKS.

This sequence belongs to the DNA mismatch repair MutS family.

Functionally, this protein is involved in the repair of mismatches in DNA. It is possible that it carries out the mismatch recognition step. This protein has a weak ATPase activity. The sequence is that of DNA mismatch repair protein MutS from Parabacteroides distasonis (strain ATCC 8503 / DSM 20701 / CIP 104284 / JCM 5825 / NCTC 11152).